Reading from the N-terminus, the 730-residue chain is Denticleless protein homolog (730 aa).

M1 bears the N-acetylmethionine mark. WD repeat units lie at residues 47-89, 96-135, and 138-178; these read GVPV…FRKK, AHWN…LIGT, and GHQC…KDGF. The DDB1-binding motif motif lies at 168–171; that stretch reads WDTR. A compositionally biased stretch (polar residues) spans 188–198; it reads AHNTSDKQTPS. A disordered region spans residues 188 to 210; that stretch reads AHNTSDKQTPSKPKKKQNSKGLA. T196 is subject to Phosphothreonine. Positions 197-203 match the Nuclear localization signal motif; it reads PSKPKKK. WD repeat units lie at residues 214-253, 267-308, 313-354, and 358-398; these read DFQQ…TAYR, SSTR…TSPV, GHQN…QPPT, and GHSQ…EEKP. Positions 243-246 match the DDB1-binding motif motif; that stretch reads WDLR. The disordered stretch occupies residues 399–443; that stretch reads GGDKLSTVGWASQKKKESRPGLVTVTSSQSTPAKAPRAKCNPSNS. A phosphoserine mark is found at S410 and S426. T464 carries the post-translational modification Phosphothreonine; by CDK1 and CDK2. Positions 465–498 are disordered; the sequence is PTFSIKTSPAKARSPINRRGSVSSVSPKPPSSFK. A phosphoserine mark is found at S485, S490, S495, and S512. Phosphothreonine is present on T516. The residue at position 557 (S557) is a Phosphoserine. 2 disordered regions span residues 599–631 and 644–703; these read SKDS…YASE and GEGS…TITP. A phosphoserine mark is found at S676 and S679. Over residues 679-689 the composition is skewed to polar residues; that stretch reads SPSSQTPNSRR. 2 positions are modified to phosphothreonine: T684 and T702. S717 carries the post-translational modification Phosphoserine.

The protein belongs to the WD repeat cdt2 family. Component of the DCX(DTL) E3 ubiquitin ligase complex (also called CRL4(CDT2)), at least composed of CUL4 (CUL4A or CUL4B), DDB1, DTL/CDT2 and RBX1. Interacts with CDKN1A. Interacts with DDB1. Interacts with FBXO11; SCF(FBXWO11) controls DTL stability but DCX(DTL) does not control FBXO11 stability. Interacts with CRY1. Post-translationally, ubiquitinated by the anaphase promoting complex/cyclosome (APC/C). Autoubiquitinated through 'Lys-48'-polyubiquitin chains in a PCNA-independent reaction, allowing proteasomal turnover. Polyubiquitinated by SCF(FBXO11) when not phosphorylated, leading to its degradation. A tight regulation of the polyubiquitination by SCF(FBXO11) is involved in the control of different processes such as TGF-beta signaling, cell cycle progression and exit. In terms of processing, phosphorylated at Thr-464 by CDK1/Cyclin-B and CDK2/Cyclin-A but not by CDK2/Cyclin-E, MAPK1 or PLK1. Phosphorylation at Thr-464 inhibits the interaction with FBXO11 and decreases upon cell cycle exit induced by TGF-beta or serum starvation. As to expression, expressed in placenta and testis, very low expression seen in skeletal muscle. Detected in all hematopoietic tissues examined, with highest expression in thymus and bone marrow. A low level detected in the spleen and lymph node, and barely detectable level in the peripheral leukocytes. RA treatment down-regulated the expression in NT2 cell.

It is found in the nucleus. Its subcellular location is the nucleus membrane. It localises to the cytoplasm. The protein resides in the cytoskeleton. The protein localises to the microtubule organizing center. It is found in the centrosome. Its subcellular location is the chromosome. Its pathway is protein modification; protein ubiquitination. Its function is as follows. Substrate-specific adapter of a DCX (DDB1-CUL4-X-box) E3 ubiquitin-protein ligase complex required for cell cycle control, DNA damage response and translesion DNA synthesis. The DCX(DTL) complex, also named CRL4(CDT2) complex, mediates the polyubiquitination and subsequent degradation of CDT1, CDKN1A/p21(CIP1), FBH1, KMT5A and SDE2. CDT1 degradation in response to DNA damage is necessary to ensure proper cell cycle regulation of DNA replication. CDKN1A/p21(CIP1) degradation during S phase or following UV irradiation is essential to control replication licensing. KMT5A degradation is also important for a proper regulation of mechanisms such as TGF-beta signaling, cell cycle progression, DNA repair and cell migration. Most substrates require their interaction with PCNA for their polyubiquitination: substrates interact with PCNA via their PIP-box, and those containing the 'K+4' motif in the PIP box, recruit the DCX(DTL) complex, leading to their degradation. In undamaged proliferating cells, the DCX(DTL) complex also promotes the 'Lys-164' monoubiquitination of PCNA, thereby being involved in PCNA-dependent translesion DNA synthesis. The DDB1-CUL4A-DTL E3 ligase complex regulates the circadian clock function by mediating the ubiquitination and degradation of CRY1. The sequence is that of Denticleless protein homolog (DTL) from Homo sapiens (Human).